A 470-amino-acid chain; its full sequence is AAA-ATPase At5g17730 (470 aa).

A signal peptide spans 1–18 (MFSLRNLPSLAPFVSAYA). 252 to 259 (GPPGTGKT) lines the ATP pocket.

The protein belongs to the AAA ATPase family. BCS1 subfamily. Requires Mg(2+) as cofactor.

The enzyme catalyses ATP + H2O = ADP + phosphate + H(+). This is AAA-ATPase At5g17730 from Arabidopsis thaliana (Mouse-ear cress).